Here is a 70-residue protein sequence, read N- to C-terminus: V-type proton ATPase subunit e1 (70 aa).

2 consecutive transmembrane segments (helical) span residues 1–21 and 36–56; these read MGFL…SLCV and LTLV…VYIA.

The protein belongs to the V-ATPase e1/e2 subunit family. In terms of assembly, V-ATPase is a heteromultimeric enzyme composed of a peripheral catalytic V1 complex (components A to H) attached to an integral membrane V0 proton pore complex (components: a, c, c'', d and e).

The protein resides in the golgi apparatus. Its subcellular location is the trans-Golgi network membrane. Functionally, subunit of the integral membrane V0 complex of vacuolar ATPase. V-ATPase is responsible for acidifying a variety of intracellular compartments in eukaryotic cells. This Arabidopsis thaliana (Mouse-ear cress) protein is V-type proton ATPase subunit e1 (VHA-e1).